Here is a 741-residue protein sequence, read N- to C-terminus: Eukaryotic translation initiation factor 3 subunit B (741 aa).

The span at 1-10 shows a compositional bias: polar residues; that stretch reads MAPSFDTLSE. The segment at 1-21 is disordered; the sequence is MAPSFDTLSEQDLHEEEEEEI. An RRM domain is found at 40–126; sequence TFIVIDGLPI…HTLAVNKLMD (87 aa). WD repeat units follow at residues 193-230, 232-289, 303-344, 514-557, and 572-610; these read AHWT…KQKQ, PHPF…RSFV, APKK…LLGK, IEKK…EKAE, and VEHY…HTFA. Residues 696–723 form a disordered region; it reads DAYGIPEDADDAKVAKDAPPVSEDQGEA.

This sequence belongs to the eIF-3 subunit B family. In terms of assembly, component of the eukaryotic translation initiation factor 3 (eIF-3) complex.

It is found in the cytoplasm. Its function is as follows. RNA-binding component of the eukaryotic translation initiation factor 3 (eIF-3) complex, which is involved in protein synthesis of a specialized repertoire of mRNAs and, together with other initiation factors, stimulates binding of mRNA and methionyl-tRNAi to the 40S ribosome. The eIF-3 complex specifically targets and initiates translation of a subset of mRNAs involved in cell proliferation. The protein is Eukaryotic translation initiation factor 3 subunit B (prt1) of Aspergillus oryzae (strain ATCC 42149 / RIB 40) (Yellow koji mold).